Here is a 312-residue protein sequence, read N- to C-terminus: DNA-directed RNA polymerase subunit alpha (312 aa).

The alpha N-terminal domain (alpha-NTD) stretch occupies residues 1–229 (MLQYQIDRIE…ELFQPLATVT (229 aa)). An alpha C-terminal domain (alpha-CTD) region spans residues 246–312 (IPLEELNLSV…ISIPQSRTSA (67 aa)).

It belongs to the RNA polymerase alpha chain family. In terms of assembly, in cyanobacteria the RNAP catalytic core is composed of 2 alpha, 1 beta, 1 beta', 1 gamma and 1 omega subunit. When a sigma factor is associated with the core the holoenzyme is formed, which can initiate transcription.

It catalyses the reaction RNA(n) + a ribonucleoside 5'-triphosphate = RNA(n+1) + diphosphate. Functionally, DNA-dependent RNA polymerase catalyzes the transcription of DNA into RNA using the four ribonucleoside triphosphates as substrates. The protein is DNA-directed RNA polymerase subunit alpha of Prochlorococcus marinus (strain SARG / CCMP1375 / SS120).